Consider the following 269-residue polypeptide: Tryptophan synthase alpha chain (269 aa).

Residues Glu41 and Asp52 each act as proton acceptor in the active site.

The protein belongs to the TrpA family. In terms of assembly, tetramer of two alpha and two beta chains.

The enzyme catalyses (1S,2R)-1-C-(indol-3-yl)glycerol 3-phosphate + L-serine = D-glyceraldehyde 3-phosphate + L-tryptophan + H2O. It functions in the pathway amino-acid biosynthesis; L-tryptophan biosynthesis; L-tryptophan from chorismate: step 5/5. Functionally, the alpha subunit is responsible for the aldol cleavage of indoleglycerol phosphate to indole and glyceraldehyde 3-phosphate. This is Tryptophan synthase alpha chain from Geobacillus stearothermophilus (Bacillus stearothermophilus).